We begin with the raw amino-acid sequence, 548 residues long: Probable malate:quinone oxidoreductase (548 aa).

Belongs to the MQO family. FAD serves as cofactor.

It catalyses the reaction (S)-malate + a quinone = a quinol + oxaloacetate. It participates in carbohydrate metabolism; tricarboxylic acid cycle; oxaloacetate from (S)-malate (quinone route): step 1/1. The sequence is that of Probable malate:quinone oxidoreductase from Escherichia coli (strain SE11).